Reading from the N-terminus, the 467-residue chain is Regulatory protein NPR6 (467 aa).

One can recognise a BTB domain in the interval 27-111 (SDVTFSVEGR…LYSGQVSIVP (85 aa)). The C2HC NPR-type zinc-finger motif lies at 117-131 (RSNCGDRGCWHTHCT). Residues Cys120, Cys125, His127, and Cys130 each coordinate Zn(2+). 4 ANK repeats span residues 247–276 (QKIRRMRRALDSSDVELVKLMVMGEGLNLD), 277–306 (ESLALIYAVENCSREVVKALLELGAADVNY), 311–340 (TGKTALHIAAEMVSPDMVAVLLDHHADPNV), and 344–378 (DGITPLDILRTLTSDFLFKGAIPGLTHIEPNKLRL). Residues 434–467 (RDIGDDNSNQREGMNLHHHHHDPSTMYHHHHHHF) are disordered. Residues 449-467 (LHHHHHDPSTMYHHHHHHF) are compositionally biased toward basic residues.

This sequence belongs to the plant 'ANKYRIN-BTB/POZ' family. 'NOOT-BOP-COCH-like' (NBCL) subfamily. As to quaternary structure, homodimer or heterodimer with BOP2. Interacts with PAN.

It is found in the cytoplasm. The protein resides in the nucleus. The protein operates within protein modification; protein ubiquitination. May act as a substrate-specific adapter of an E3 ubiquitin-protein ligase complex (CUL3-RBX1-BTB) which mediates the ubiquitination and subsequent proteasomal degradation of target proteins. Acts redundantly with BOP2. BOP1/2 promote leaf and floral meristem fate and determinacy in a pathway targeting AP1 and AGL24. BOP1/2 act as transcriptional co-regulators through direct interaction with TGA factors, including PAN, a direct regulator of AP1. Controls lateral organ fate through positive regulation of adaxial-abaxial polarity genes ATHB-14/PHB, YAB1/FIL and YAB3, and through positive regulation of LOB domain-containing genes LOB, LBD6/AS2 and LBD36. Promotes and maintains a developmentally determinate state in leaf cells through the negative regulation of JAG, JGL and class I KNOX genes. Is also involved in nectary development, formation of normal abscission zones (AZs) and suppression of bract formation, probably by regulating the cell wall disorganization. The polypeptide is Regulatory protein NPR6 (Arabidopsis thaliana (Mouse-ear cress)).